Here is a 547-residue protein sequence, read N- to C-terminus: Glucose-6-phosphate isomerase (547 aa).

The Proton donor role is filled by E353. Residues H384 and K512 contribute to the active site.

The protein belongs to the GPI family.

It is found in the cytoplasm. It catalyses the reaction alpha-D-glucose 6-phosphate = beta-D-fructose 6-phosphate. It functions in the pathway carbohydrate biosynthesis; gluconeogenesis. Its pathway is carbohydrate degradation; glycolysis; D-glyceraldehyde 3-phosphate and glycerone phosphate from D-glucose: step 2/4. Catalyzes the reversible isomerization of glucose-6-phosphate to fructose-6-phosphate. The sequence is that of Glucose-6-phosphate isomerase from Glaesserella parasuis serovar 5 (strain SH0165) (Haemophilus parasuis).